The primary structure comprises 246 residues: Probable septum site-determining protein MinC (246 aa).

The interval 116 to 140 is disordered; that stretch reads AAVSPPPPPPARAEPAPPAARPAPG. Residues 119–136 are compositionally biased toward pro residues; that stretch reads SPPPPPPARAEPAPPAAR.

The protein belongs to the MinC family. As to quaternary structure, interacts with MinD and FtsZ.

Cell division inhibitor that blocks the formation of polar Z ring septums. Rapidly oscillates between the poles of the cell to destabilize FtsZ filaments that have formed before they mature into polar Z rings. Prevents FtsZ polymerization. This is Probable septum site-determining protein MinC from Xanthomonas oryzae pv. oryzae (strain MAFF 311018).